Reading from the N-terminus, the 114-residue chain is Class I hydrophobin SC16 (114 aa).

The first 17 residues, 1 to 17 (MRFFATLVLALPALAMA), serve as a signal peptide directing secretion. Cystine bridges form between Cys33–Cys93, Cys40–Cys87, Cys41–Cys74, and Cys94–Cys107. Asn42 is a glycosylation site (N-linked (GlcNAc...) asparagine).

This sequence belongs to the fungal hydrophobin family. As to quaternary structure, self-assembles to form functional amyloid fibrils called rodlets. Self-assembly into fibrillar rodlets occurs spontaneously at hydrophobic:hydrophilic interfaces and the rodlets further associate laterally to form amphipathic monolayers.

The protein resides in the secreted. Its subcellular location is the cell wall. Aerial growth, conidiation, and dispersal of filamentous fungi in the environment rely upon a capability of their secreting small amphipathic proteins called hydrophobins (HPBs) with low sequence identity. Class I can self-assemble into an outermost layer of rodlet bundles on aerial cell surfaces, conferring cellular hydrophobicity that supports fungal growth, development and dispersal; whereas Class II form highly ordered films at water-air interfaces through intermolecular interactions but contribute nothing to the rodlet structure. This chain is Class I hydrophobin SC16, found in Schizophyllum commune (strain H4-8 / FGSC 9210) (Split gill fungus).